Reading from the N-terminus, the 1657-residue chain is Alsin (1657 aa).

RCC1 repeat units lie at residues 60–109, 110–168, and 169–219; these read GEVY…VTDN, GVAY…LSIS, and REIW…LVQC. The tract at residues 432 to 481 is disordered; sequence TGAQAGSSAIGPEGLKDSREEQVKQESMQGKKSSSLVDIREEETEGGSRR. Positions 445–455 are enriched in basic and acidic residues; sequence GLKDSREEQVK. The span at 456-467 shows a compositional bias: polar residues; that stretch reads QESMQGKKSSSL. Residues S465, S466, S483, and S492 each carry the phosphoserine modification. T510 is subject to Phosphothreonine. 2 RCC1 repeats span residues 526 to 577 and 578 to 628; these read TEVW…LTAK and SQVY…LVDT. Position 533 is an N6-acetyllysine (K533). One can recognise a DH domain in the interval 690 to 885; it reads GYIASLHELA…ECLALHLGRK (196 aa). The PH domain occupies 901–1007; it reads GKMTDSLRKP…RAISQAVDQA (107 aa). MORN repeat units follow at residues 1049–1071, 1072–1094, 1100–1122, 1123–1145, 1151–1173, 1175–1197, 1198–1220, and 1221–1244; these read YDGRWLSGKPHGRGVLKWPDGKM, YSGMFRNGLEDGYGEYRIPNKAM, YVGHWKEGKMCGQGVYSYASGEV, FEGCFQDNMRHGHGLLRSGKLTS, FIGQWVMDKKAGYGVFDDITRGE, YMGMWQDDVCQGNGVVVTQFGLY, YEGNFHLNKMMGNGVLLSEDDTI, and YEGEFSDDWTLSGKGTLTMPNGDY. Position 1335 is a phosphoserine (S1335). A VPS9 domain is found at 1513–1657; the sequence is KQPDIALLGF…YYQIQREKLN (145 aa).

As to quaternary structure, forms a heteromeric complex with ALS2CL. Interacts with ALS2CL.

In terms of biological role, may act as a GTPase regulator. Controls survival and growth of spinal motoneurons. The sequence is that of Alsin (ALS2) from Pan troglodytes (Chimpanzee).